The chain runs to 291 residues: Probable L-ascorbate peroxidase 3, peroxisomal (291 aa).

The Proton acceptor role is filled by histidine 41. Residues 114-133 (YVPGRRDSSDSPEEGRLPDA) form a disordered region. The span at 116-133 (PGRRDSSDSPEEGRLPDA) shows a compositional bias: basic and acidic residues. A heme b-binding site is contributed by histidine 161. 3 residues coordinate K(+): threonine 162, threonine 178, and aspartate 185. Residues 263-283 (LLMQTAAGVAVAAAVVAWAYL) traverse the membrane as a helical segment.

The protein belongs to the peroxidase family. Ascorbate peroxidase subfamily. Requires heme b as cofactor. Expressed in stems.

The protein localises to the peroxisome membrane. The catalysed reaction is L-ascorbate + H2O2 = L-dehydroascorbate + 2 H2O. Functionally, plays a key role in hydrogen peroxide removal. This Oryza sativa subsp. japonica (Rice) protein is Probable L-ascorbate peroxidase 3, peroxisomal.